Reading from the N-terminus, the 450-residue chain is uncharacterized protein (450 aa).

The 58-residue stretch at 1–58 (MQKNQIVDLEITDLSYEAMGVAHLDGMTVFVNNALPGEIVSAKLLKVKKNFAFAKIEK) folds into the TRAM domain. Residues glutamine 280, tyrosine 309, glutamate 330, and aspartate 378 each coordinate S-adenosyl-L-methionine. The active-site Nucleophile is cysteine 405.

Belongs to the class I-like SAM-binding methyltransferase superfamily. RNA M5U methyltransferase family.

This is an uncharacterized protein from Lactobacillus johnsonii (strain CNCM I-12250 / La1 / NCC 533).